The chain runs to 267 residues: tRNA pseudouridine synthase A (267 aa).

The active-site Nucleophile is the aspartate 53. Tyrosine 111 lines the substrate pocket.

Belongs to the tRNA pseudouridine synthase TruA family. In terms of assembly, homodimer.

The catalysed reaction is uridine(38/39/40) in tRNA = pseudouridine(38/39/40) in tRNA. Its function is as follows. Formation of pseudouridine at positions 38, 39 and 40 in the anticodon stem and loop of transfer RNAs. This is tRNA pseudouridine synthase A from Alcanivorax borkumensis (strain ATCC 700651 / DSM 11573 / NCIMB 13689 / SK2).